The following is an 84-amino-acid chain: Small ribosomal subunit protein uS17 (84 aa).

It belongs to the universal ribosomal protein uS17 family. As to quaternary structure, part of the 30S ribosomal subunit.

Functionally, one of the primary rRNA binding proteins, it binds specifically to the 5'-end of 16S ribosomal RNA. The protein is Small ribosomal subunit protein uS17 of Borrelia hermsii (strain HS1 / DAH).